We begin with the raw amino-acid sequence, 81 residues long: Photosystem I iron-sulfur center (81 aa).

4Fe-4S ferredoxin-type domains are found at residues S2–W31 and G37–Y68. The [4Fe-4S] cluster site is built by C11, C14, C17, C21, C48, C51, C54, and C58.

In terms of assembly, the cyanobacterial PSI reaction center is composed of one copy each of PsaA,B,C,D,E,F,I,J,K,L,M and X, and forms trimeric complexes. [4Fe-4S] cluster is required as a cofactor.

The protein resides in the cellular thylakoid membrane. It carries out the reaction reduced [plastocyanin] + hnu + oxidized [2Fe-2S]-[ferredoxin] = oxidized [plastocyanin] + reduced [2Fe-2S]-[ferredoxin]. Its function is as follows. Apoprotein for the two 4Fe-4S centers FA and FB of photosystem I (PSI); essential for photochemical activity. FB is the terminal electron acceptor of PSI, donating electrons to ferredoxin. The C-terminus interacts with PsaA/B/D and helps assemble the protein into the PSI complex. Required for binding of PsaD and PsaE to PSI. PSI is a plastocyanin/cytochrome c6-ferredoxin oxidoreductase, converting photonic excitation into a charge separation, which transfers an electron from the donor P700 chlorophyll pair to the spectroscopically characterized acceptors A0, A1, FX, FA and FB in turn. This chain is Photosystem I iron-sulfur center, found in Prochlorococcus marinus (strain SARG / CCMP1375 / SS120).